We begin with the raw amino-acid sequence, 300 residues long: Centromere protein O (300 aa).

2 coiled-coil regions span residues 18–42 (LAHL…QSVQ) and 83–109 (NQTV…QAYH). At S35 the chain carries Phosphoserine.

It belongs to the CENP-O/MCM21 family. As to quaternary structure, component of the CENPA-CAD complex, composed of CENPI, CENPK, CENPL, CENPO, CENPP, CENPQ, CENPR and CENPS. The CENPA-CAD complex interacts with the CENPA-NAC complex, at least composed of CENPA, CENPC, CENPH, CENPM, CENPN, CENPT and CENPU.

The protein resides in the nucleus. It is found in the chromosome. Its subcellular location is the centromere. It localises to the kinetochore. Functionally, component of the CENPA-CAD (nucleosome distal) complex, a complex recruited to centromeres which is involved in assembly of kinetochore proteins, mitotic progression and chromosome segregation. May be involved in incorporation of newly synthesized CENPA into centromeres via its interaction with the CENPA-NAC complex. Modulates the kinetochore-bound levels of NDC80 complex. The sequence is that of Centromere protein O (CENPO) from Homo sapiens (Human).